A 706-amino-acid chain; its full sequence is Polyribonucleotide nucleotidyltransferase (706 aa).

Mg(2+) is bound by residues aspartate 486 and aspartate 492. The KH domain maps to 552–611; the sequence is PRIIAMKINPEKIRDVIGKGGAVIRALTEETGTQIDIQEDGSVKIACTSMEAGELAKKRI. The S1 motif domain occupies 621–689; it reads GKVYEGPVIK…EKGRLRLSMK (69 aa).

It belongs to the polyribonucleotide nucleotidyltransferase family. Requires Mg(2+) as cofactor.

It is found in the cytoplasm. It catalyses the reaction RNA(n+1) + phosphate = RNA(n) + a ribonucleoside 5'-diphosphate. In terms of biological role, involved in mRNA degradation. Catalyzes the phosphorolysis of single-stranded polyribonucleotides processively in the 3'- to 5'-direction. This is Polyribonucleotide nucleotidyltransferase from Thiobacillus denitrificans (strain ATCC 25259 / T1).